A 348-amino-acid chain; its full sequence is Uroporphyrinogen decarboxylase (348 aa).

Substrate is bound by residues 27–31 (RQAGR), Phe46, Asp76, Tyr152, Ser207, and His320.

It belongs to the uroporphyrinogen decarboxylase family. In terms of assembly, homodimer.

The protein resides in the cytoplasm. It catalyses the reaction uroporphyrinogen III + 4 H(+) = coproporphyrinogen III + 4 CO2. The protein operates within porphyrin-containing compound metabolism; protoporphyrin-IX biosynthesis; coproporphyrinogen-III from 5-aminolevulinate: step 4/4. Its function is as follows. Catalyzes the decarboxylation of four acetate groups of uroporphyrinogen-III to yield coproporphyrinogen-III. This Bacillus cereus (strain AH820) protein is Uroporphyrinogen decarboxylase.